Consider the following 392-residue polypeptide: Pectate lyase 3 (392 aa).

The signal sequence occupies residues 1–25; it reads MGIKHCCYILYFTLALVTLLQPVRS. N37 carries an N-linked (GlcNAc...) asparagine glycan. A disulfide bridge connects residues C54 and C71. 3 residues coordinate Ca(2+): D194, D218, and D222. Residue R270 is part of the active site.

The protein belongs to the polysaccharide lyase 1 family. Amb a subfamily. As to quaternary structure, monomer. Ca(2+) serves as cofactor. In terms of processing, the N-terminus is blocked. Pollen and flowers.

The enzyme catalyses Eliminative cleavage of (1-&gt;4)-alpha-D-galacturonan to give oligosaccharides with 4-deoxy-alpha-D-galact-4-enuronosyl groups at their non-reducing ends.. The protein operates within glycan metabolism; pectin degradation; 2-dehydro-3-deoxy-D-gluconate from pectin: step 2/5. Its function is as follows. Has pectate lyase activity. The protein is Pectate lyase 3 of Ambrosia artemisiifolia (Common ragweed).